Consider the following 892-residue polypeptide: Alanine--tRNA ligase (892 aa).

His565, His569, Cys678, and His682 together coordinate Zn(2+). Residues 857–876 form a disordered region; it reads GGKGGGGRPDMAQAGGPDGA.

The protein belongs to the class-II aminoacyl-tRNA synthetase family. Zn(2+) serves as cofactor.

The protein localises to the cytoplasm. The enzyme catalyses tRNA(Ala) + L-alanine + ATP = L-alanyl-tRNA(Ala) + AMP + diphosphate. Functionally, catalyzes the attachment of alanine to tRNA(Ala) in a two-step reaction: alanine is first activated by ATP to form Ala-AMP and then transferred to the acceptor end of tRNA(Ala). Also edits incorrectly charged Ser-tRNA(Ala) and Gly-tRNA(Ala) via its editing domain. The sequence is that of Alanine--tRNA ligase from Bradyrhizobium diazoefficiens (strain JCM 10833 / BCRC 13528 / IAM 13628 / NBRC 14792 / USDA 110).